A 128-amino-acid chain; its full sequence is Fluoride-specific ion channel FluC (128 aa).

The next 4 membrane-spanning stretches (helical) occupy residues 5-25 (IVAI…LSLA), 35-55 (LGTL…AVVF), 67-87 (LFVI…SVEV), and 96-116 (FGWA…LTAL). Gly-75 and Thr-78 together coordinate Na(+).

This sequence belongs to the fluoride channel Fluc/FEX (TC 1.A.43) family.

The protein localises to the cell inner membrane. It carries out the reaction fluoride(in) = fluoride(out). Its activity is regulated as follows. Na(+) is not transported, but it plays an essential structural role and its presence is essential for fluoride channel function. Functionally, fluoride-specific ion channel. Important for reducing fluoride concentration in the cell, thus reducing its toxicity. The chain is Fluoride-specific ion channel FluC from Burkholderia cenocepacia (strain HI2424).